The chain runs to 387 residues: Protein adenylyltransferase VopS (387 aa).

ATP is bound by residues 76-77 (IT), 122-124 (LDS), 353-355 (GNG), and arginine 359. Residues 278–387 (LNMDNLKELH…NAENSLHGIK (110 aa)) enclose the Fido domain.

It localises to the secreted. The catalysed reaction is L-tyrosyl-[protein] + ATP = O-(5'-adenylyl)-L-tyrosyl-[protein] + diphosphate. The enzyme catalyses L-threonyl-[protein] + ATP = 3-O-(5'-adenylyl)-L-threonyl-[protein] + diphosphate. Functionally, adenylyltransferase involved in virulence by mediating the addition of adenosine 5'-monophosphate (AMP) to specific threonine residue of host Rho GTPases RhoA, Rac and Cdc42. The resulting AMPylation prevents the interaction of Rho GTPases with downstream effectors, thereby inhibiting actin assembly in infected cells. The sequence is that of Protein adenylyltransferase VopS (vopS) from Vibrio parahaemolyticus serotype O3:K6 (strain RIMD 2210633).